A 457-amino-acid polypeptide reads, in one-letter code: Glutamate--tRNA ligase 1 (457 aa).

The 'HIGH' region motif lies at 9–19 (PSPTGYIHIGN). Positions 250–254 (GLSKR) match the 'KMSKS' region motif. An ATP-binding site is contributed by Lys253.

It belongs to the class-I aminoacyl-tRNA synthetase family. Glutamate--tRNA ligase type 1 subfamily. Monomer.

The protein resides in the cytoplasm. The catalysed reaction is tRNA(Glu) + L-glutamate + ATP = L-glutamyl-tRNA(Glu) + AMP + diphosphate. In terms of biological role, catalyzes the attachment of glutamate to tRNA(Glu) in a two-step reaction: glutamate is first activated by ATP to form Glu-AMP and then transferred to the acceptor end of tRNA(Glu). In Brucella abortus (strain S19), this protein is Glutamate--tRNA ligase 1.